We begin with the raw amino-acid sequence, 77 residues long: uncharacterized protein (77 aa).

Positions 1–15 (MNRTSESVEPQQNEK) are enriched in polar residues. Disordered regions lie at residues 1-20 (MNRTSESVEPQQNEKTAVHW) and 31-52 (TYSNEDDEDNEEGDESRPQRTF). A compositionally biased stretch (acidic residues) spans 33–44 (SNEDDEDNEEGD).

This is an uncharacterized protein from Schizosaccharomyces pombe (strain 972 / ATCC 24843) (Fission yeast).